A 90-amino-acid polypeptide reads, in one-letter code: Small ribosomal subunit protein uS15 (90 aa).

This sequence belongs to the universal ribosomal protein uS15 family. In terms of assembly, part of the 30S ribosomal subunit. Forms a bridge to the 50S subunit in the 70S ribosome, contacting the 23S rRNA.

In terms of biological role, one of the primary rRNA binding proteins, it binds directly to 16S rRNA where it helps nucleate assembly of the platform of the 30S subunit by binding and bridging several RNA helices of the 16S rRNA. Its function is as follows. Forms an intersubunit bridge (bridge B4) with the 23S rRNA of the 50S subunit in the ribosome. This chain is Small ribosomal subunit protein uS15, found in Tropheryma whipplei (strain TW08/27) (Whipple's bacillus).